Reading from the N-terminus, the 90-residue chain is Small ribosomal subunit protein uS15 (90 aa).

Belongs to the universal ribosomal protein uS15 family. Part of the 30S ribosomal subunit. Forms a bridge to the 50S subunit in the 70S ribosome, contacting the 23S rRNA.

One of the primary rRNA binding proteins, it binds directly to 16S rRNA where it helps nucleate assembly of the platform of the 30S subunit by binding and bridging several RNA helices of the 16S rRNA. Its function is as follows. Forms an intersubunit bridge (bridge B4) with the 23S rRNA of the 50S subunit in the ribosome. The sequence is that of Small ribosomal subunit protein uS15 from Blochmanniella floridana.